We begin with the raw amino-acid sequence, 332 residues long: Glycerol-3-phosphate dehydrogenase [NAD(P)+] (332 aa).

Positions 11, 12, 32, 33, and 106 each coordinate NADPH. Positions 106 and 136 each coordinate sn-glycerol 3-phosphate. NADPH is bound at residue Ala-140. 5 residues coordinate sn-glycerol 3-phosphate: Lys-191, Asp-244, Ser-254, Arg-255, and Asn-256. Lys-191 serves as the catalytic Proton acceptor. Arg-255 lines the NADPH pocket. Residues Val-280 and Glu-282 each coordinate NADPH.

Belongs to the NAD-dependent glycerol-3-phosphate dehydrogenase family.

Its subcellular location is the cytoplasm. It carries out the reaction sn-glycerol 3-phosphate + NAD(+) = dihydroxyacetone phosphate + NADH + H(+). It catalyses the reaction sn-glycerol 3-phosphate + NADP(+) = dihydroxyacetone phosphate + NADPH + H(+). It participates in membrane lipid metabolism; glycerophospholipid metabolism. Its function is as follows. Catalyzes the reduction of the glycolytic intermediate dihydroxyacetone phosphate (DHAP) to sn-glycerol 3-phosphate (G3P), the key precursor for phospholipid synthesis. The protein is Glycerol-3-phosphate dehydrogenase [NAD(P)+] of Corynebacterium kroppenstedtii (strain DSM 44385 / JCM 11950 / CIP 105744 / CCUG 35717).